Here is a 262-residue protein sequence, read N- to C-terminus: E3 ubiquitin-protein ligase NEURL3 (262 aa).

Residues 17–173 (ALRFHAEAKG…TTKAIELLDP (157 aa)) form the NHR domain. The RING-type zinc finger occupies 202-241 (CAICFYHAANTRLVPCGHTYFCRYCAWRVFSDTAKCPVCR).

As to quaternary structure, (Microbial infection) Interacts with hepatitis C virus protein E1; this interaction prevents E1 interaction with E2 and subsequently inhibits viral infection.

Its subcellular location is the cytoplasm. The catalysed reaction is S-ubiquitinyl-[E2 ubiquitin-conjugating enzyme]-L-cysteine + [acceptor protein]-L-lysine = [E2 ubiquitin-conjugating enzyme]-L-cysteine + N(6)-ubiquitinyl-[acceptor protein]-L-lysine.. It functions in the pathway protein modification; protein ubiquitination. E3 ubiquitin-protein ligase that plays a role in various biological processes such as lung development or innate immunity. Seems to utilize UBE2E1. Promotes innate antiviral response by catalyzing 'Lys-63'-linked ubiquitination of IRF7. Also inhibits hepatitis C virus assembly by directly binding to viral E1 envelope glycoprotein to disrupt its interaction with E2. Plays an essential role in TLR4-mediated activation of MAPK pathways by promoting 'Lys-48'-linked polyubiquitination of the phosphatase DUSP1/MKP1. This is E3 ubiquitin-protein ligase NEURL3 (NEURL3) from Homo sapiens (Human).